A 75-amino-acid polypeptide reads, in one-letter code: Mating pheromone Er-10 (75 aa).

A signal peptide spans 1–19; the sequence is MNKLAILAIIAMVLFSANA. The propeptide occupies 20 to 37; that stretch reads FRFQSRIRSNVEAKTETR. Intrachain disulfides connect Cys-40–Cys-56, Cys-47–Cys-74, and Cys-52–Cys-64.

As to quaternary structure, homodimer.

It is found in the secreted. Functionally, mating ciliate pheromones (or gamones) are diffusible extracellular communication signals that distinguish different intraspecific classes of cells commonly referred to as 'mating types'. They prepare the latter for conjugation by changing their cell surface properties. This Euplotes raikovi protein is Mating pheromone Er-10 (MAT10).